The primary structure comprises 87 residues: Bradykinin-potentiating peptide NDBP12 (87 aa).

A signal peptide spans 1–22; it reads MNKRVLLVIFFVTLLVADEVNS. Positions 64–75 are enriched in low complexity; the sequence is PAEAPAPAAAAP. The tract at residues 64–87 is disordered; sequence PAEAPAPAAAAPEEPPVEQRRRRR.

Belongs to the non-disulfide-bridged peptide (NDBP) superfamily. Long chain multifunctional peptide (group 2) family. As to expression, expressed by the venom gland.

It is found in the secreted. Functionally, inhibits angiotensin-converting enzyme (ACE), but does not serve as substrate for the enzyme. Potentiates bradykinin (BK) on the isolated guinea pig ileum as well as the isolated rat uterus for contraction. Also potentiates in vivo the depressor effect of BK on arterial blood pressure in the normotensive anesthetized rat. The chain is Bradykinin-potentiating peptide NDBP12 from Lychas mucronatus (Chinese swimming scorpion).